Reading from the N-terminus, the 342-residue chain is Biotin synthase (342 aa).

Positions 63–288 (PEVEVEGIIS…RTMLRFAGGR (226 aa)) constitute a Radical SAM core domain. 3 residues coordinate [4Fe-4S] cluster: Cys78, Cys82, and Cys85. Residues Cys121, Cys154, Cys213, and Arg283 each coordinate [2Fe-2S] cluster.

Belongs to the radical SAM superfamily. Biotin synthase family. In terms of assembly, homodimer. It depends on [4Fe-4S] cluster as a cofactor. The cofactor is [2Fe-2S] cluster.

The enzyme catalyses (4R,5S)-dethiobiotin + (sulfur carrier)-SH + 2 reduced [2Fe-2S]-[ferredoxin] + 2 S-adenosyl-L-methionine = (sulfur carrier)-H + biotin + 2 5'-deoxyadenosine + 2 L-methionine + 2 oxidized [2Fe-2S]-[ferredoxin]. It functions in the pathway cofactor biosynthesis; biotin biosynthesis; biotin from 7,8-diaminononanoate: step 2/2. Its function is as follows. Catalyzes the conversion of dethiobiotin (DTB) to biotin by the insertion of a sulfur atom into dethiobiotin via a radical-based mechanism. The polypeptide is Biotin synthase (Mycobacteroides abscessus (strain ATCC 19977 / DSM 44196 / CCUG 20993 / CIP 104536 / JCM 13569 / NCTC 13031 / TMC 1543 / L948) (Mycobacterium abscessus)).